Reading from the N-terminus, the 233-residue chain is Protein TIPIN homolog (233 aa).

A compositionally biased stretch (acidic residues) spans 1–14 (MDEMEDFFENDELD). Disordered regions lie at residues 1 to 39 (MDEM…RVVE) and 134 to 233 (GETG…NNDW). 2 stretches are compositionally biased toward basic and acidic residues: residues 163 to 190 (DLFK…KTAE) and 197 to 216 (EEYR…AKEA). The segment covering 217 to 227 (ADEDALMEDFG) has biased composition (acidic residues).

The protein belongs to the CSM3 family.

Its subcellular location is the cytoplasm. The protein localises to the nucleus. Functionally, required for normal progression of S-phase. Important for cell survival after DNA damage or replication stress. The polypeptide is Protein TIPIN homolog (Caenorhabditis elegans).